The following is a 62-amino-acid chain: UPF0434 protein Rpic_2808 (62 aa).

It belongs to the UPF0434 family.

The protein is UPF0434 protein Rpic_2808 of Ralstonia pickettii (strain 12J).